The primary structure comprises 351 residues: UPF0764 protein C16orf89 homolog (351 aa).

A signal peptide spans 1-25 (MKSLKMLYPLFMLLVLSSKIDLSNQ).

This sequence belongs to the UPF0764 family. Homodimer.

It is found in the secreted. This chain is UPF0764 protein C16orf89 homolog, found in Danio rerio (Zebrafish).